The sequence spans 342 residues: UDP-3-O-acylglucosamine N-acyltransferase (342 aa).

Histidine 238 serves as the catalytic Proton acceptor.

The protein belongs to the transferase hexapeptide repeat family. LpxD subfamily. In terms of assembly, homotrimer.

It carries out the reaction a UDP-3-O-[(3R)-3-hydroxyacyl]-alpha-D-glucosamine + a (3R)-hydroxyacyl-[ACP] = a UDP-2-N,3-O-bis[(3R)-3-hydroxyacyl]-alpha-D-glucosamine + holo-[ACP] + H(+). Its pathway is bacterial outer membrane biogenesis; LPS lipid A biosynthesis. In terms of biological role, catalyzes the N-acylation of UDP-3-O-acylglucosamine using 3-hydroxyacyl-ACP as the acyl donor. Is involved in the biosynthesis of lipid A, a phosphorylated glycolipid that anchors the lipopolysaccharide to the outer membrane of the cell. The protein is UDP-3-O-acylglucosamine N-acyltransferase of Tolumonas auensis (strain DSM 9187 / NBRC 110442 / TA 4).